The chain runs to 258 residues: 3-deoxy-manno-octulosonate cytidylyltransferase (258 aa).

The protein belongs to the KdsB family.

It is found in the cytoplasm. The catalysed reaction is 3-deoxy-alpha-D-manno-oct-2-ulosonate + CTP = CMP-3-deoxy-beta-D-manno-octulosonate + diphosphate. Its pathway is nucleotide-sugar biosynthesis; CMP-3-deoxy-D-manno-octulosonate biosynthesis; CMP-3-deoxy-D-manno-octulosonate from 3-deoxy-D-manno-octulosonate and CTP: step 1/1. It participates in bacterial outer membrane biogenesis; lipopolysaccharide biosynthesis. In terms of biological role, activates KDO (a required 8-carbon sugar) for incorporation into bacterial lipopolysaccharide in Gram-negative bacteria. The polypeptide is 3-deoxy-manno-octulosonate cytidylyltransferase (Nitrobacter hamburgensis (strain DSM 10229 / NCIMB 13809 / X14)).